We begin with the raw amino-acid sequence, 303 residues long: Flavin-dependent thymidylate synthase (303 aa).

Residues 1-21 (MALTSEQRAEIEAQRSEPQLT) form a disordered region. The ThyX domain maps to 43 to 256 (GFLRVVDYMG…PATAAAFEEY (214 aa)). Residues Thr89, 112-114 (RHR), and Glu120 each bind FAD. Residues 109 to 112 (QWIR), 120 to 124 (EYSAR), and Arg195 contribute to the dUMP site. Residues 112–122 (RHRMASVNEYS) carry the ThyX motif motif. Residues 211-213 (DLH) and His217 each bind FAD. A dUMP-binding site is contributed by Arg222. The active-site Involved in ionization of N3 of dUMP, leading to its activation is the Arg222.

Belongs to the thymidylate synthase ThyX family. As to quaternary structure, homotetramer. It depends on FAD as a cofactor.

It catalyses the reaction dUMP + (6R)-5,10-methylene-5,6,7,8-tetrahydrofolate + NADPH + H(+) = dTMP + (6S)-5,6,7,8-tetrahydrofolate + NADP(+). The protein operates within pyrimidine metabolism; dTTP biosynthesis. Its function is as follows. Catalyzes the reductive methylation of 2'-deoxyuridine-5'-monophosphate (dUMP) to 2'-deoxythymidine-5'-monophosphate (dTMP) while utilizing 5,10-methylenetetrahydrofolate (mTHF) as the methyl donor, and NADPH and FADH(2) as the reductant. This Gluconobacter oxydans (strain 621H) (Gluconobacter suboxydans) protein is Flavin-dependent thymidylate synthase.